A 207-amino-acid polypeptide reads, in one-letter code: 2,3-bisphosphoglycerate-dependent phosphoglycerate mutase (207 aa).

Residues 10–17 (RHGQSEWN), 23–24 (TG), arginine 62, 89–92 (ERDY), lysine 100, 116–117 (RR), and 160–161 (GN) each bind substrate. Residue histidine 11 is the Tele-phosphohistidine intermediate of the active site. Residue glutamate 89 is the Proton donor/acceptor of the active site.

This sequence belongs to the phosphoglycerate mutase family. BPG-dependent PGAM subfamily. Homodimer.

The catalysed reaction is (2R)-2-phosphoglycerate = (2R)-3-phosphoglycerate. Its pathway is carbohydrate degradation; glycolysis; pyruvate from D-glyceraldehyde 3-phosphate: step 3/5. Functionally, catalyzes the interconversion of 2-phosphoglycerate and 3-phosphoglycerate. In Bradyrhizobium sp. (strain BTAi1 / ATCC BAA-1182), this protein is 2,3-bisphosphoglycerate-dependent phosphoglycerate mutase.